The chain runs to 560 residues: 2-succinyl-5-enolpyruvyl-6-hydroxy-3-cyclohexene-1-carboxylate synthase (560 aa).

The protein belongs to the TPP enzyme family. MenD subfamily. In terms of assembly, homodimer. Mg(2+) serves as cofactor. It depends on Mn(2+) as a cofactor. Thiamine diphosphate is required as a cofactor.

The enzyme catalyses isochorismate + 2-oxoglutarate + H(+) = 5-enolpyruvoyl-6-hydroxy-2-succinyl-cyclohex-3-ene-1-carboxylate + CO2. It participates in quinol/quinone metabolism; 1,4-dihydroxy-2-naphthoate biosynthesis; 1,4-dihydroxy-2-naphthoate from chorismate: step 2/7. It functions in the pathway quinol/quinone metabolism; menaquinone biosynthesis. In terms of biological role, catalyzes the thiamine diphosphate-dependent decarboxylation of 2-oxoglutarate and the subsequent addition of the resulting succinic semialdehyde-thiamine pyrophosphate anion to isochorismate to yield 2-succinyl-5-enolpyruvyl-6-hydroxy-3-cyclohexene-1-carboxylate (SEPHCHC). This chain is 2-succinyl-5-enolpyruvyl-6-hydroxy-3-cyclohexene-1-carboxylate synthase, found in Staphylococcus saprophyticus subsp. saprophyticus (strain ATCC 15305 / DSM 20229 / NCIMB 8711 / NCTC 7292 / S-41).